Consider the following 957-residue polypeptide: SH3 domain-binding protein 4-A (957 aa).

Residues 54–113 enclose the SH3 1 domain; sequence ENVKEVVAIKDYCPNNFTTLKFSKGEHLYVLDASGGDWWYAHNSTEMGYIPSSYVQPLNY. Residues 312–449 form the ZU5 domain; the sequence is TSIVCRLDSS…LEPVMYVVMV (138 aa). The SH3 2 domain maps to 649-719; it reads TSLKYGKLLK…HAKNVLVVGK (71 aa).

As to quaternary structure, homodimer or homooligomer.

The protein resides in the membrane. The protein localises to the clathrin-coated pit. Its subcellular location is the cytoplasmic vesicle. It is found in the clathrin-coated vesicle. It localises to the nucleus. In terms of biological role, possible role in regulating endocytosis of the transferrin receptor at the plasma membrane. Alternatively, may function as a negative regulator of the amino acid-induced TOR signaling by inhibiting the formation of active Rag GTPase complexes. Preferentially binds inactive Rag GTPase complexes and prevents their interaction with the mTORC1 complex inhibiting its relocalization to lysosomes and its activation. Thereby, may indirectly regulate cell growth, proliferation and autophagy. The sequence is that of SH3 domain-binding protein 4-A (sh3bp4-a) from Xenopus laevis (African clawed frog).